We begin with the raw amino-acid sequence, 287 residues long: MATKPQDANTTSREAITSKADSPPRPTALIFDSGVGGLSVYQEIRQLLPDLHYIYAFDNVAFPYGEKSGEFIVERVLEIVTAVQQRHPLAIVVIACNTASTVSLPALRERFAFPVVGVVPAIKPAVRLTRNGVVGLLATRATVHASYTLDLIARFATDCKIELLGSSELVEVAETKLHGGVVPLEVLKKILHPWLSMREPPDTIVLGCTHFPLLTEELAQVLPEGTRMVDSGAAIARRTAWLISSQENVISSQDENIAYCMALDEDTDALLPVLQSYGFPKLQKLPI.

Residues 1-15 (MATKPQDANTTSREA) show a composition bias toward polar residues. The interval 1–25 (MATKPQDANTTSREAITSKADSPPR) is disordered. Residues 32-33 (DS) and 64-65 (YG) contribute to the substrate site. Cys96 functions as the Proton donor/acceptor in the catalytic mechanism. 97–98 (NT) contributes to the substrate binding site. Cys208 functions as the Proton donor/acceptor in the catalytic mechanism. Residue 209–210 (TH) participates in substrate binding.

Belongs to the aspartate/glutamate racemases family.

The catalysed reaction is L-glutamate = D-glutamate. It participates in cell wall biogenesis; peptidoglycan biosynthesis. Its function is as follows. Provides the (R)-glutamate required for cell wall biosynthesis. This is Glutamate racemase from Yersinia pseudotuberculosis serotype O:1b (strain IP 31758).